A 213-amino-acid chain; its full sequence is 3-demethoxyubiquinol 3-hydroxylase (213 aa).

The Fe cation site is built by Glu-62, Glu-92, His-95, Glu-144, Glu-176, and His-179.

Belongs to the COQ7 family. Fe cation is required as a cofactor.

The protein resides in the cell membrane. The enzyme catalyses a 5-methoxy-2-methyl-3-(all-trans-polyprenyl)benzene-1,4-diol + AH2 + O2 = a 3-demethylubiquinol + A + H2O. Its pathway is cofactor biosynthesis; ubiquinone biosynthesis. Its function is as follows. Catalyzes the hydroxylation of 2-nonaprenyl-3-methyl-6-methoxy-1,4-benzoquinol during ubiquinone biosynthesis. The chain is 3-demethoxyubiquinol 3-hydroxylase from Legionella pneumophila (strain Paris).